The following is a 278-amino-acid chain: MGIRIYKAYTPGTRNRSVSDYKNISCLKPEKSLTSGKMSKKGRNNQGIITSRHRGGGHKRLYRKIDFRRKKIGIYGIVKTIEYDPNRNSHICLVNYEDGEKRYILYPRGIKIGDTILSSMDASIFVGNTLPLTQIPLGTAIHNIELQPGKGGQLVRAAGTVAQVVAKEGKWTSIRLPSGEVRLIYQKCLATIGQVGNPEFNNQSIGKAGSKRWQGKRPKVRGTAMNPVDHPHGGGEGRTSIGRKRPLTPWGYPTIGKKTRSKNKYSNIFVIRKRKLNS.

Disordered regions lie at residues 32-56 (SLTSGKMSKKGRNNQGIITSRHRGG) and 203-256 (QSIG…PTIG). Basic residues predominate over residues 209-220 (GSKRWQGKRPKV).

Belongs to the universal ribosomal protein uL2 family. In terms of assembly, part of the 50S ribosomal subunit.

It localises to the plastid. The protein localises to the chloroplast. The sequence is that of Large ribosomal subunit protein uL2c (rpl2) from Chara vulgaris (Common stonewort).